Consider the following 325-residue polypeptide: Tetraacyldisaccharide 4'-kinase (325 aa).

Position 55 to 62 (55 to 62 (TAGGNGKT)) interacts with ATP.

It belongs to the LpxK family.

It catalyses the reaction a lipid A disaccharide + ATP = a lipid IVA + ADP + H(+). It functions in the pathway glycolipid biosynthesis; lipid IV(A) biosynthesis; lipid IV(A) from (3R)-3-hydroxytetradecanoyl-[acyl-carrier-protein] and UDP-N-acetyl-alpha-D-glucosamine: step 6/6. Functionally, transfers the gamma-phosphate of ATP to the 4'-position of a tetraacyldisaccharide 1-phosphate intermediate (termed DS-1-P) to form tetraacyldisaccharide 1,4'-bis-phosphate (lipid IVA). This is Tetraacyldisaccharide 4'-kinase from Salmonella paratyphi C (strain RKS4594).